Consider the following 279-residue polypeptide: UTP--glucose-1-phosphate uridylyltransferase (279 aa).

Belongs to the UDPGP type 2 family.

It carries out the reaction alpha-D-glucose 1-phosphate + UTP + H(+) = UDP-alpha-D-glucose + diphosphate. May play a role in stationary phase survival. The chain is UTP--glucose-1-phosphate uridylyltransferase (galU) from Pseudomonas aeruginosa (strain ATCC 15692 / DSM 22644 / CIP 104116 / JCM 14847 / LMG 12228 / 1C / PRS 101 / PAO1).